A 154-amino-acid chain; its full sequence is 6,7-dimethyl-8-ribityllumazine synthase (154 aa).

5-amino-6-(D-ribitylamino)uracil-binding positions include phenylalanine 15, 47–49 (TFD), and 71–73 (AVI). Residue 76-77 (ET) participates in (2S)-2-hydroxy-3-oxobutyl phosphate binding. The active-site Proton donor is histidine 79. Leucine 104 lines the 5-amino-6-(D-ribitylamino)uracil pocket. Arginine 119 contacts (2S)-2-hydroxy-3-oxobutyl phosphate.

It belongs to the DMRL synthase family.

It catalyses the reaction (2S)-2-hydroxy-3-oxobutyl phosphate + 5-amino-6-(D-ribitylamino)uracil = 6,7-dimethyl-8-(1-D-ribityl)lumazine + phosphate + 2 H2O + H(+). It participates in cofactor biosynthesis; riboflavin biosynthesis; riboflavin from 2-hydroxy-3-oxobutyl phosphate and 5-amino-6-(D-ribitylamino)uracil: step 1/2. In terms of biological role, catalyzes the formation of 6,7-dimethyl-8-ribityllumazine by condensation of 5-amino-6-(D-ribitylamino)uracil with 3,4-dihydroxy-2-butanone 4-phosphate. This is the penultimate step in the biosynthesis of riboflavin. The sequence is that of 6,7-dimethyl-8-ribityllumazine synthase from Saccharolobus islandicus (strain M.16.27) (Sulfolobus islandicus).